The chain runs to 154 residues: 6,7-dimethyl-8-ribityllumazine synthase (154 aa).

5-amino-6-(D-ribitylamino)uracil is bound by residues Trp-22, 56–58, and 80–82; these read SHE and AVI. Residue 85–86 participates in (2S)-2-hydroxy-3-oxobutyl phosphate binding; that stretch reads DT. The Proton donor role is filled by His-88. 5-amino-6-(D-ribitylamino)uracil is bound at residue Phe-113. Arg-127 contributes to the (2S)-2-hydroxy-3-oxobutyl phosphate binding site.

It belongs to the DMRL synthase family.

It carries out the reaction (2S)-2-hydroxy-3-oxobutyl phosphate + 5-amino-6-(D-ribitylamino)uracil = 6,7-dimethyl-8-(1-D-ribityl)lumazine + phosphate + 2 H2O + H(+). It functions in the pathway cofactor biosynthesis; riboflavin biosynthesis; riboflavin from 2-hydroxy-3-oxobutyl phosphate and 5-amino-6-(D-ribitylamino)uracil: step 1/2. Catalyzes the formation of 6,7-dimethyl-8-ribityllumazine by condensation of 5-amino-6-(D-ribitylamino)uracil with 3,4-dihydroxy-2-butanone 4-phosphate. This is the penultimate step in the biosynthesis of riboflavin. This chain is 6,7-dimethyl-8-ribityllumazine synthase, found in Deinococcus geothermalis (strain DSM 11300 / CIP 105573 / AG-3a).